We begin with the raw amino-acid sequence, 451 residues long: Tryptophan--tRNA ligase (451 aa).

ATP-binding positions include 10–12 (TTT) and 18–19 (GN). Residues 11–19 (TTGTPHLGN) carry the 'HIGH' region motif. Residue D143 participates in L-tryptophan binding. Residues 155–157 (GRD), L195, and 202–206 (KMSKS) each bind ATP. Residues 202–206 (KMSKS) carry the 'KMSKS' region motif.

Belongs to the class-I aminoacyl-tRNA synthetase family. As to quaternary structure, homodimer.

Its subcellular location is the cytoplasm. The catalysed reaction is tRNA(Trp) + L-tryptophan + ATP = L-tryptophyl-tRNA(Trp) + AMP + diphosphate + H(+). Functionally, catalyzes the attachment of tryptophan to tRNA(Trp). The sequence is that of Tryptophan--tRNA ligase from Bordetella bronchiseptica (strain ATCC BAA-588 / NCTC 13252 / RB50) (Alcaligenes bronchisepticus).